The primary structure comprises 809 residues: Poly(A) polymerase (809 aa).

The tract at residues 1 to 50 (MNKNGGPPVANITTSSTTITSTTTTQAKSQLPSSLSVNNLHTTQGSTDQP) is disordered. Over residues 12 to 25 (ITTSSTTITSTTTT) the composition is skewed to low complexity. Over residues 26 to 50 (QAKSQLPSSLSVNNLHTTQGSTDQP) the composition is skewed to polar residues. Residues 133–135 (FGS), 146–148 (DID), aspartate 200, lysine 262, tyrosine 271, and 280–281 (GV) each bind ATP. Aspartate 146, aspartate 148, and aspartate 200 together coordinate Mg(2+). Disordered regions lie at residues 529–760 (FVKD…QQIQ) and 785–809 (ISSS…IRGN). A compositionally biased stretch (basic and acidic residues) spans 530 to 540 (VKDEGPEEPVK). Residues 572-655 (SPITTNINST…TPPTTTTINS (84 aa)) show a composition bias toward low complexity. Positions 656 to 665 (VQPPSAQPTE) are enriched in polar residues. The segment covering 666–706 (NGSSTSNSPTSTSINNTALPPNPTTNSESTIETTITLPTTL) has biased composition (low complexity). The span at 707-735 (ESQTSTLKDSNEISTNGTAVATEPTITSP) shows a compositional bias: polar residues. Composition is skewed to low complexity over residues 736–760 (SVNI…QQIQ) and 785–794 (ISSSSETSQS).

It belongs to the poly(A) polymerase family. Mg(2+) is required as a cofactor. Requires Mn(2+) as cofactor.

The protein localises to the nucleus. It catalyses the reaction RNA(n) + ATP = RNA(n)-3'-adenine ribonucleotide + diphosphate. Functionally, polymerase that creates the 3'-poly(A) tail of mRNA's. May acquire specificity through interaction with a cleavage and polyadenylation factor. The protein is Poly(A) polymerase (papA) of Dictyostelium discoideum (Social amoeba).